The sequence spans 554 residues: Undecaprenyl phosphate-alpha-4-amino-4-deoxy-L-arabinose arabinosyl transferase (554 aa).

11 helical membrane-spanning segments follow: residues 4–24, 87–107, 115–135, 178–198, 206–226, 262–282, 293–313, 315–335, 351–371, 384–404, and 414–434; these read LKDS…LLPV, FGSI…ATLL, VLAT…TYAV, FMTK…PIVI, LVVF…PWAL, YLPI…GALF, ELFF…VAKG, LPTY…AYAT, VINL…GLGL, QKVW…FITL, and AAAC…QQVV.

Belongs to the glycosyltransferase 83 family.

It is found in the cell inner membrane. The enzyme catalyses 4-amino-4-deoxy-alpha-L-arabinopyranosyl di-trans,octa-cis-undecaprenyl phosphate + lipid IVA = lipid IIA + di-trans,octa-cis-undecaprenyl phosphate.. Its pathway is lipopolysaccharide metabolism; 4-amino-4-deoxy-beta-L-arabinose-lipid A biosynthesis. Its function is as follows. Catalyzes the transfer of the L-Ara4N moiety of the glycolipid undecaprenyl phosphate-alpha-L-Ara4N to lipid A. The modified arabinose is attached to lipid A and is required for resistance to polymyxin and cationic antimicrobial peptides. The chain is Undecaprenyl phosphate-alpha-4-amino-4-deoxy-L-arabinose arabinosyl transferase from Yersinia pseudotuberculosis serotype O:3 (strain YPIII).